Consider the following 159-residue polypeptide: Large ribosomal subunit protein uL11 (159 aa).

The span at 137–149 shows a compositional bias: basic and acidic residues; that stretch reads EGKDPREVQREVD. Residues 137–159 form a disordered region; that stretch reads EGKDPREVQREVDSGAWDKLLGG.

The protein belongs to the universal ribosomal protein uL11 family. Part of the ribosomal stalk of the 50S ribosomal subunit. Interacts with L10 and the large rRNA to form the base of the stalk. L10 forms an elongated spine to which L12 dimers bind in a sequential fashion forming a multimeric L10(L12)X complex.

In terms of biological role, forms part of the ribosomal stalk which helps the ribosome interact with GTP-bound translation factors. This Korarchaeum cryptofilum (strain OPF8) protein is Large ribosomal subunit protein uL11.